Reading from the N-terminus, the 237-residue chain is Proteasome subunit alpha type-5 (237 aa).

The protein belongs to the peptidase T1A family. In terms of assembly, the 26S proteasome consists of a 20S proteasome core and two 19S regulatory subunits. The 20S proteasome core is composed of 28 subunits that are arranged in four stacked rings, resulting in a barrel-shaped structure. The two end rings are each formed by seven alpha subunits, and the two central rings are each formed by seven beta subunits. The catalytic chamber with the active sites is on the inside of the barrel.

It localises to the cytoplasm. The protein localises to the nucleus. Functionally, the proteasome is a multicatalytic proteinase complex which is characterized by its ability to cleave peptides with Arg, Phe, Tyr, Leu, and Glu adjacent to the leaving group at neutral or slightly basic pH. The proteasome has an ATP-dependent proteolytic activity. In Oryza sativa subsp. japonica (Rice), this protein is Proteasome subunit alpha type-5 (PAE1).